A 214-amino-acid polypeptide reads, in one-letter code: dITP/XTP pyrophosphatase (214 aa).

16–21 provides a ligand contact to substrate; sequence THNPGK. Positions 48 and 77 each coordinate Mg(2+). The active-site Proton acceptor is the aspartate 77. Residues serine 78, 163–166, lysine 186, and 198–199 contribute to the substrate site; these read FGYD and HR.

This sequence belongs to the HAM1 NTPase family. In terms of assembly, homodimer. The cofactor is Mg(2+).

It carries out the reaction XTP + H2O = XMP + diphosphate + H(+). The catalysed reaction is dITP + H2O = dIMP + diphosphate + H(+). It catalyses the reaction ITP + H2O = IMP + diphosphate + H(+). Pyrophosphatase that catalyzes the hydrolysis of nucleoside triphosphates to their monophosphate derivatives, with a high preference for the non-canonical purine nucleotides XTP (xanthosine triphosphate), dITP (deoxyinosine triphosphate) and ITP. Seems to function as a house-cleaning enzyme that removes non-canonical purine nucleotides from the nucleotide pool, thus preventing their incorporation into DNA/RNA and avoiding chromosomal lesions. This chain is dITP/XTP pyrophosphatase, found in Bradyrhizobium sp. (strain BTAi1 / ATCC BAA-1182).